The following is a 258-amino-acid chain: ATP synthase subunit a (258 aa).

The next 5 helical transmembrane spans lie at 38–58 (KPVW…YVGA), 94–114 (WFPY…IGLF), 118–138 (YPVT…FVLT), 193–213 (ILAG…FGLP), and 215–235 (AFVS…VAVI).

Belongs to the ATPase A chain family. In terms of assembly, F-type ATPases have 2 components, CF(1) - the catalytic core - and CF(0) - the membrane proton channel. CF(1) has five subunits: alpha(3), beta(3), gamma(1), delta(1), epsilon(1). CF(0) has three main subunits: a(1), b(2) and c(9-12). The alpha and beta chains form an alternating ring which encloses part of the gamma chain. CF(1) is attached to CF(0) by a central stalk formed by the gamma and epsilon chains, while a peripheral stalk is formed by the delta and b chains.

The protein localises to the cell membrane. In terms of biological role, key component of the proton channel; it plays a direct role in the translocation of protons across the membrane. The chain is ATP synthase subunit a from Rubrobacter xylanophilus (strain DSM 9941 / JCM 11954 / NBRC 16129 / PRD-1).